The chain runs to 208 residues: Uracil phosphoribosyltransferase (208 aa).

5-phospho-alpha-D-ribose 1-diphosphate contacts are provided by residues R78, R103, and D130–S138. Uracil-binding positions include I193 and G198 to A200. A 5-phospho-alpha-D-ribose 1-diphosphate-binding site is contributed by D199.

The protein belongs to the UPRTase family. Mg(2+) serves as cofactor.

The enzyme catalyses UMP + diphosphate = 5-phospho-alpha-D-ribose 1-diphosphate + uracil. It functions in the pathway pyrimidine metabolism; UMP biosynthesis via salvage pathway; UMP from uracil: step 1/1. Its activity is regulated as follows. Allosterically activated by GTP. In terms of biological role, catalyzes the conversion of uracil and 5-phospho-alpha-D-ribose 1-diphosphate (PRPP) to UMP and diphosphate. The chain is Uracil phosphoribosyltransferase from Pasteurella multocida (strain Pm70).